The following is a 241-amino-acid chain: MAGHSKWANIQHRKGRQDAKRGKVFTKLIKEITVAARMGGGDPNFNPRLRLAVDKAKAENMPSENIDRAIKRGTGELDGVSYEEARYEGYGIGGAAVMVDCLTDNKTRTVADVRHAFSKNGGNMGTDGCVAFQFKHCGQLMFAPGTSEDALMEAALEAGAEDVVTNDDGSIEVITAPYEYSNVKDALEKASFRAEFGEVTMKPQNETELSGGDAERMQKLLDALESLDDVQEVYTSAVMDE.

The tract at residues 1-21 (MAGHSKWANIQHRKGRQDAKR) is disordered.

The protein belongs to the TACO1 family.

The protein localises to the cytoplasm. This Aromatoleum aromaticum (strain DSM 19018 / LMG 30748 / EbN1) (Azoarcus sp. (strain EbN1)) protein is Probable transcriptional regulatory protein AZOSEA20720.